An 859-amino-acid polypeptide reads, in one-letter code: Active breakpoint cluster region-related protein (859 aa).

Residues 26–84 form a disordered region; it reads TDEYDGEGNEEQKGPPEGSETMPYIDESPTMSPQLSARSQGGGDGVSPTPPEGLAPGVE. A compositionally biased stretch (polar residues) spans 54 to 64; the sequence is PTMSPQLSARS. Ser-57 carries the post-translational modification Phosphoserine. In terms of domain architecture, DH spans 91–284; that stretch reads MRKLVLSGFL…QNFLSSINED (194 aa). One can recognise a PH domain in the interval 301-459; sequence QLVKDGFLVE…WREAIQKLQK (159 aa). A C2 domain is found at 484-613; the sequence is TVHNIPVTSN…ETKNWHTDVI (130 aa). The 199-residue stretch at 647 to 845 folds into the Rho-GAP domain; sequence VKISVVTKRE…YYLQHPPISF (199 aa).

As to quaternary structure, interacts with DLG4. Highly enriched in the brain. Much weaker expression in heart, lung and muscle.

Its subcellular location is the cell projection. It localises to the dendritic spine. The protein resides in the axon. It is found in the synapse. Its function is as follows. Protein with a unique structure having two opposing regulatory activities toward small GTP-binding proteins. The C-terminus is a GTPase-activating protein domain which stimulates GTP hydrolysis by RAC1, RAC2 and CDC42. Accelerates the intrinsic rate of GTP hydrolysis of RAC1 or CDC42, leading to down-regulation of the active GTP-bound form. The central Dbl homology (DH) domain functions as a guanine nucleotide exchange factor (GEF) that modulates the GTPases CDC42, RHOA and RAC1. Promotes the conversion of CDC42, RHOA and RAC1 from the GDP-bound to the GTP-bound form. Functions as an important negative regulator of neuronal RAC1 activity. Regulates macrophage functions such as CSF-1 directed motility and phagocytosis through the modulation of RAC1 activity. This chain is Active breakpoint cluster region-related protein, found in Homo sapiens (Human).